A 316-amino-acid chain; its full sequence is Lipoyl synthase (316 aa).

Residues cysteine 66, cysteine 71, cysteine 77, cysteine 92, cysteine 96, cysteine 99, and serine 306 each contribute to the [4Fe-4S] cluster site. The Radical SAM core domain maps to 78 to 295 (YSQQTATFMV…ADIAKSMGFK (218 aa)).

It belongs to the radical SAM superfamily. Lipoyl synthase family. [4Fe-4S] cluster is required as a cofactor.

The protein localises to the cytoplasm. It carries out the reaction [[Fe-S] cluster scaffold protein carrying a second [4Fe-4S](2+) cluster] + N(6)-octanoyl-L-lysyl-[protein] + 2 oxidized [2Fe-2S]-[ferredoxin] + 2 S-adenosyl-L-methionine + 4 H(+) = [[Fe-S] cluster scaffold protein] + N(6)-[(R)-dihydrolipoyl]-L-lysyl-[protein] + 4 Fe(3+) + 2 hydrogen sulfide + 2 5'-deoxyadenosine + 2 L-methionine + 2 reduced [2Fe-2S]-[ferredoxin]. It participates in protein modification; protein lipoylation via endogenous pathway; protein N(6)-(lipoyl)lysine from octanoyl-[acyl-carrier-protein]: step 2/2. In terms of biological role, catalyzes the radical-mediated insertion of two sulfur atoms into the C-6 and C-8 positions of the octanoyl moiety bound to the lipoyl domains of lipoate-dependent enzymes, thereby converting the octanoylated domains into lipoylated derivatives. The protein is Lipoyl synthase of Rhodopirellula baltica (strain DSM 10527 / NCIMB 13988 / SH1).